The following is a 114-amino-acid chain: uncharacterized protein (114 aa).

The region spanning isoleucine 6–glycine 114 is the HIT domain. The short motif at histidine 98–histidine 102 is the Histidine triad motif element.

This is an uncharacterized protein from Synechocystis sp. (strain ATCC 27184 / PCC 6803 / Kazusa).